The sequence spans 44 residues: Large ribosomal subunit protein P2 (44 aa).

M1 is subject to N-acetylmethionine. Phosphoserine occurs at positions 17 and 19. The residue at position 21 (K21) is an N6-acetyllysine; alternate. Residue K21 is modified to N6-succinyllysine; alternate.

The protein belongs to the eukaryotic ribosomal protein P1/P2 family. In terms of assembly, heterodimer with RPLP1 at the lateral ribosomal stalk of the large ribosomal subunit. Phosphorylated.

In terms of biological role, plays an important role in the elongation step of protein synthesis. This chain is Large ribosomal subunit protein P2 (RPLP2), found in Oryctolagus cuniculus (Rabbit).